The chain runs to 3567 residues: Sushi, von Willebrand factor type A, EGF and pentraxin domain-containing protein 1 (3567 aa).

The first 17 residues, 1–17 (MWSRLAFCCWALALVSG), serve as a signal peptide directing secretion. In terms of domain architecture, VWFA spans 84–265 (ELVFLVDESS…LARRALHEDL (182 aa)). N187 carries an N-linked (GlcNAc...) asparagine glycan. Sushi domains lie at 377–436 (VHCP…FCRV), 437–496 (RTCP…RCVE), and 497–561 (RHCA…VCKD). Disulfide bonds link C379–C421, C407–C434, C439–C481, C467–C494, C499–C544, and C530–C559. HYR domains are found at residues 560 to 644 (KDVE…KVID) and 645 to 724 (VEPP…VIKG). In terms of domain architecture, Sushi 4 spans 725-789 (SPCEVPFTPV…YSTEWPDCAI (65 aa)). 20 disulfide bridges follow: C727-C769, C753-C787, C1196-C1207, C1201-C1216, C1218-C1227, C1234-C1245, C1239-C1254, C1256-C1265, C1272-C1283, C1277-C1292, C1294-C1303, C1310-C1321, C1315-C1330, C1332-C1341, C1348-C1359, C1353-C1368, C1370-C1379, C1386-C1397, C1391-C1406, and C1408-C1417. An EGF-like 1 domain is found at 1192–1228 (VFHECFLNPCHNSGTCQQLGRGYVCLCPPGYTGLKCE). One can recognise an EGF-like 2; calcium-binding domain in the interval 1230–1266 (DIDECSSLPCLNGGICRDQVGGFTCECSLGYSGQICE). Residues 1268-1304 (NINECISSPCLNKGTCTDGLASYRCTCVKGYMGVHCE) enclose the EGF-like 3; calcium-binding domain. Residues 1306-1342 (DVNECQSSPCLNNAVCKDQVGGFSCKCPPGFLGTRCE) form the EGF-like 4; calcium-binding domain. Residues 1344–1380 (NVDECLSQPCQNGATCKDGANSFRCQCPAGFTGTHCE) form the EGF-like 5; calcium-binding domain. In terms of domain architecture, EGF-like 6; calcium-binding spans 1382 to 1418 (NINECQSNPCRNQATCVDELNSYSCKCQPGFSGHRCE). Positions 1423 to 1627 (SGFNLDFEVS…VKVDSSSMFC (205 aa)) constitute a Pentraxin (PTX) domain. 2 Sushi domains span residues 1628 to 1686 (SDCP…HCER) and 1687 to 1744 (IRCG…SCLD). 35 disulfide bridges follow: C1630/C1671, C1657/C1684, C1689/C1729, C1715/C1742, C1748/C1760, C1754/C1769, C1771/C1782, C1788/C1828, C1814/C1841, C1846/C1886, C1872/C1899, C1904/C1944, C1930/C1957, C1962/C2002, C1988/C2015, C2020/C2060, C2046/C2077, C2082/C2125, C2111/C2140, C2145/C2185, C2171/C2198, C2203/C2244, C2230/C2258, C2263/C2303, C2289/C2317, C2322/C2362, C2348/C2375, C2380/C2421, C2407/C2434, C2439/C2479, C2465/C2492, C2497/C2537, C2523/C2550, C2555/C2595, and C2581/C2607. The EGF-like 7; calcium-binding domain maps to 1744–1783 (DVDECAVGSDCSEHASCLNTNGSYVCSCNPPYTGDGKNCA). 14 consecutive Sushi domains span residues 1780-1843 (KNCA…SCEA), 1844-1901 (ISCG…VCEL), 1902-1959 (VKCS…SCQL), 1960-2017 (VSCG…QCLA), 2018-2079 (VSCD…RCIA), 2080-2142 (HFCE…QCIP), 2143-2200 (VRCG…TCHP), 2201-2260 (VSCN…SCTP), 2261-2319 (LNCG…KCVP), 2320-2377 (TKCA…ICKM), 2378-2436 (VLCP…ECVP), 2437-2494 (VECP…MCKP), 2495-2552 (IECP…SCDA), and 2553-2609 (IHCS…TCVP). Residues 2638–2645 (DMMEVPYL) are important for the interaction with integrin ITGA9:ITGB1. Sushi domains lie at 2660–2711 (NTKE…SCIS), 2712–2769 (IECD…RCEA), 2770–2827 (ISCS…MCIP), 2828–2885 (VDCG…SCMP), 2886–2943 (VRCP…VCKP), 2944–3001 (ATCG…SCLP), 3002–3057 (CRCS…LCEH), 3058–3115 (AQCG…TCEP), 3116–3174 (LSCG…TCSP), 3175–3234 (KKCP…SCIP), 3235–3292 (VVCG…VCRE), 3293–3350 (NRCE…LCKP), 3351–3409 (NPCP…RCEK), and 3410–3466 (ISCG…VCRA). Disulfide bonds link C2682/C2709, C2714/C2754, C2740/C2767, C2772/C2812, C2798/C2825, C2830/C2870, C2856/C2883, C2888/C2928, C2914/C2941, C2946/C2986, C2972/C2999, C3004/C3043, C3029/C3055, C3060/C3100, C3086/C3113, C3118/C3159, C3144/C3172, C3177/C3217, C3203/C3232, C3237/C3277, C3263/C3290, C3295/C3335, C3321/C3348, C3353/C3394, C3380/C3407, C3412/C3452, C3438/C3464, C3500/C3510, C3504/C3516, C3518/C3527, C3532/C3542, C3536/C3548, and C3550/C3559. 2 consecutive EGF-like domains span residues 3496-3528 (EEPICILPCLNGGRCVAPYQCDCPTGWTGSRCH) and 3529-3560 (TATCQSPCLNGGKCIRPNRCHCLSAWTGHDCS).

As to quaternary structure, interacts (via Sushi domain 21) with ITGA9:ITGB1; thereby inhibits Ca(2+) intracellular signaling and as a result represses vasocontraction. Interacts (via Sushi domain 21) with ITGA4:ITGB1; thereby inhibits Ca(2+) intracellular signaling and as a result represses vasocontraction. Interacts with ANGPT1 and ANGPT2. Interacts with PEAR1 (via extracellular domain). Interacts with HSPG2, TLN1, FN1, COPA, CCT2, IQGAP1, LAMC1 and NID1. Interacts (via C-terminus) with TIE1. As to expression, expressed in the media layer of the arterial wall (at protein level). Highly expressed in lung and placenta, weakly expressed in the kidney, heart, brain and spleen. Also expressed in bone and periosteum, but not in cartilage and skeletal muscle.

The protein localises to the secreted. The protein resides in the nucleus. Its subcellular location is the cytoplasm. It is found in the membrane. Functionally, required for morphological development, cell alignment and migration of lymphatic endothelial cells during embryonic development, potentially via modulation of ANGPT2-TIE1 signaling and subsequent activation of FOXC2 transcription. Required for embryonic lymphatic vascular development, via mediating the correct formation of the first lymphovenous contact site and tight association of the lymphatic endothelium with the venous endothelium. Represses PRKCA-mediated L-type voltage-gated channel Ca(2+) influx and ROCK-mediated calcium sensitivity in vascular smooth muscle cells, via its interaction with integrins, thereby inhibiting vasocontraction. Promotes platelet activation, via its interaction with PEAR1 and subsequent activation of AKT/mTOR signaling. Plays a role in epidermal development and keratinocyte differentiation, independent of cell-cell adhesion. May play a role in initial cell attachment of stromal osteogenic cells. May promote myoblast cell adhesion when in the presence of integrin ITGA9:ITGB1. This is Sushi, von Willebrand factor type A, EGF and pentraxin domain-containing protein 1 (Svep1) from Mus musculus (Mouse).